Reading from the N-terminus, the 104-residue chain is UPF0145 protein VNG_2432C (104 aa).

The protein belongs to the UPF0145 family.

This chain is UPF0145 protein VNG_2432C, found in Halobacterium salinarum (strain ATCC 700922 / JCM 11081 / NRC-1) (Halobacterium halobium).